The primary structure comprises 373 residues: UDP-glucose 4-epimerase 3 (373 aa).

Residue 27–58 participates in NAD(+) binding; sequence SVLVTGGAGYIGTHTVLRLLEKGFAVTVVDNF. Serine 153 contacts substrate. The active-site Proton acceptor is the tyrosine 177.

Belongs to the NAD(P)-dependent epimerase/dehydratase family. It depends on NAD(+) as a cofactor.

It carries out the reaction UDP-alpha-D-glucose = UDP-alpha-D-galactose. The protein operates within carbohydrate metabolism; galactose metabolism. Its function is as follows. Catalyzes the interconversion between UDP-glucose and UDP-galactose. The polypeptide is UDP-glucose 4-epimerase 3 (UGE-3) (Oryza sativa subsp. japonica (Rice)).